A 678-amino-acid chain; its full sequence is Inositol-trisphosphate 3-kinase C (678 aa).

Disordered regions lie at residues 26–128 and 151–300; these read LEAL…RRNS and DLQS…LDLS. Residues 44 to 58 show a composition bias toward gly residues; it reads PGAGGPTGRPEGGGP. 2 stretches are compositionally biased toward basic and acidic residues: residues 61–76 and 107–116; these read WIEE…RTDL and EKPRQNKELD. Position 160 is a phosphoserine (Ser-160). 2 stretches are compositionally biased toward basic and acidic residues: residues 173-196 and 220-236; these read ELDR…DNLR and SGKE…HDTD. A Nuclear export signal motif is present at residues 318-326; that stretch reads LCPVPRLII. The disordered stretch occupies residues 328-380; the sequence is PETPEPEAQPVGPQSRIEGGTGGFSSASSFDESEDDLVAGGGGTSDPEDRAGS. Position 330 is a phosphothreonine (Thr-330). Position 398 is a phosphoserine (Ser-398). ATP-binding positions include Lys-426, 466–468, and Asp-479; that span reads EDL. Residues Lys-481, 502 to 508, and 529 to 536 contribute to the substrate site; these read RKDMYEK and KPRYMQWR. The segment at 504–512 is calmodulin-binding; the sequence is DMYEKMVAV. ATP contacts are provided by Lys-553 and Asp-633. A substrate-binding site is contributed by Lys-636.

It belongs to the inositol phosphokinase (IPK) family.

The protein resides in the nucleus. The protein localises to the cytoplasm. It carries out the reaction 1D-myo-inositol 1,4,5-trisphosphate + ATP = 1D-myo-inositol 1,3,4,5-tetrakisphosphate + ADP + H(+). Its activity is regulated as follows. Activated by calcium/calmodulin. Inhibited by high concentrations of the substrate Ins(1,2,4)P3, and allosterically activated by the product Ins(1,3,4,5)P4. In terms of biological role, catalyzes the phosphorylation of 1D-myo-inositol 1,4,5-trisphosphate (InsP3) into 1D-myo-inositol 1,3,4,5-tetrakisphosphate and participates to the regulation of calcium homeostasis. Can phosphorylate inositol 2,4,5-triphosphate to inositol 2,4,5,6-tetraphosphate. The sequence is that of Inositol-trisphosphate 3-kinase C (Itpkc) from Mus musculus (Mouse).